The primary structure comprises 229 residues: Ras-related protein RABA6b (229 aa).

Position 20–27 (Gly20–Ser27) interacts with GTP. Residues Ser42–Phe50 carry the Effector region motif. Residues Asp68–Gln72, Asn126–Asp129, and Ser156–Ala157 each bind GTP. Residues Cys226 and Cys227 are each lipidated (S-geranylgeranyl cysteine).

This sequence belongs to the small GTPase superfamily. Rab family.

Its subcellular location is the cell membrane. In terms of biological role, intracellular vesicle trafficking and protein transport. The sequence is that of Ras-related protein RABA6b (RABA6B) from Arabidopsis thaliana (Mouse-ear cress).